The chain runs to 235 residues: MKKGNMIYEGKAKKIFATDNPDLVIQEFKDDASAFNALKKGTILGKGVVNNEVSCHLFSHLAGLGIENHFVEKLSEREMLCKKLEIIKAEVVMRNIAAGSLVKRYGLQEAQVLPFPIAELYLKDDALGDPLMNDAHAVAMGIASAEEIQFVKQEASKVNAALQVFFLERGLKLVDFKLEFGRHNGKILLGDEISPDTCRLWDAETMKKLDKDRFRFDLGDVEEAYIEVRHRVLGN.

The protein belongs to the SAICAR synthetase family.

The catalysed reaction is 5-amino-1-(5-phospho-D-ribosyl)imidazole-4-carboxylate + L-aspartate + ATP = (2S)-2-[5-amino-1-(5-phospho-beta-D-ribosyl)imidazole-4-carboxamido]succinate + ADP + phosphate + 2 H(+). Its pathway is purine metabolism; IMP biosynthesis via de novo pathway; 5-amino-1-(5-phospho-D-ribosyl)imidazole-4-carboxamide from 5-amino-1-(5-phospho-D-ribosyl)imidazole-4-carboxylate: step 1/2. The sequence is that of Phosphoribosylaminoimidazole-succinocarboxamide synthase from Chloroherpeton thalassium (strain ATCC 35110 / GB-78).